Here is a 681-residue protein sequence, read N- to C-terminus: Minichromosome maintenance domain-containing protein 2 (681 aa).

S292 carries the phosphoserine modification. In terms of domain architecture, MCM spans 533-621 (RQFTTEDFEK…LIAALLFETS (89 aa)).

Plays an important role in meiotic recombination and associated DNA double-strand break repair. In Homo sapiens (Human), this protein is Minichromosome maintenance domain-containing protein 2 (MCMDC2).